The sequence spans 110 residues: Large ribosomal subunit protein P2 (110 aa).

Residues 63–110 are disordered; that stretch reads ASVPSGGGVAAAAPAAGGGGADPAEAKEEKKEEPEEESDDDMGFGLFD. Residues 86–95 are compositionally biased toward basic and acidic residues; sequence AEAKEEKKEE.

Belongs to the eukaryotic ribosomal protein P1/P2 family. In terms of assembly, P1 and P2 exist as dimers at the large ribosomal subunit. Post-translationally, phosphorylated.

In terms of biological role, plays an important role in the elongation step of protein synthesis. This Cryptochiton stelleri (Giant gumboot chiton) protein is Large ribosomal subunit protein P2.